A 300-amino-acid chain; its full sequence is Quinolinate synthase (300 aa).

Residues His-23 and Ser-40 each contribute to the iminosuccinate site. Cys-85 lines the [4Fe-4S] cluster pocket. Iminosuccinate-binding positions include 111–113 (YIN) and Ser-128. Cys-171 serves as a coordination point for [4Fe-4S] cluster. Iminosuccinate contacts are provided by residues 198–200 (HPE) and Thr-215. Residue Cys-258 participates in [4Fe-4S] cluster binding.

The protein belongs to the quinolinate synthase family. Type 2 subfamily. The cofactor is [4Fe-4S] cluster.

The protein resides in the cytoplasm. The catalysed reaction is iminosuccinate + dihydroxyacetone phosphate = quinolinate + phosphate + 2 H2O + H(+). It functions in the pathway cofactor biosynthesis; NAD(+) biosynthesis; quinolinate from iminoaspartate: step 1/1. Catalyzes the condensation of iminoaspartate with dihydroxyacetone phosphate to form quinolinate. This chain is Quinolinate synthase, found in Clostridium novyi (strain NT).